A 352-amino-acid polypeptide reads, in one-letter code: S-adenosylmethionine:tRNA ribosyltransferase-isomerase (352 aa).

It belongs to the QueA family. As to quaternary structure, monomer.

Its subcellular location is the cytoplasm. It carries out the reaction 7-aminomethyl-7-carbaguanosine(34) in tRNA + S-adenosyl-L-methionine = epoxyqueuosine(34) in tRNA + adenine + L-methionine + 2 H(+). Its pathway is tRNA modification; tRNA-queuosine biosynthesis. Its function is as follows. Transfers and isomerizes the ribose moiety from AdoMet to the 7-aminomethyl group of 7-deazaguanine (preQ1-tRNA) to give epoxyqueuosine (oQ-tRNA). In Gloeobacter violaceus (strain ATCC 29082 / PCC 7421), this protein is S-adenosylmethionine:tRNA ribosyltransferase-isomerase.